The following is a 4456-amino-acid chain: Dynein axonemal heavy chain 2 (4456 aa).

Over residues 1-12 (MASKAEKKRKVA) the composition is skewed to basic residues. The tract at residues 1–55 (MASKAEKKRKVAGRGGARAGRVVRAPQSTAGPGATEASLLPDGQEPEPESGKEDS) is disordered. The segment at 1–1795 (MASKAEKKRK…RQTNTQFQYG (1795 aa)) is stem. Residues 1218-1274 (LDQIAQMRAMLMAMRDEENNLRSNLGIFKIEQPVSKDLQILEKELDALQQVWEITRD) adopt a coiled-coil conformation. One copy of the TPR 1 repeat lies at 1439 to 1474 (EDNQVALSTMKASRFVKAFEKDVDHWERCLSLILEV). AAA regions lie at residues 1794–2015 (YGYE…LLRY), 2075–2302 (DTIE…DNCN), 2407–2654 (RYPP…VFQG), and 2751–3003 (EYNL…LRRY). ATP-binding positions include 1832 to 1839 (GPAGTGKT), 2113 to 2120 (GGTGSSKT), and 2445 to 2452 (GPVGTGKT). The TPR 2 repeat unit spans residues 2750–2783 (NEYNLSPSVVPMQLVLFREAIEHITRIVRVIGQP). Position 2791–2798 (2791–2798 (GIGGSGRQ)) interacts with ATP. The interval 3018–3301 (YKKLLGEKRQ…EELRKKSEEM (284 aa)) is stalk. Residues 3041–3078 (FKIDETREKVEVMSLELEDAKKKVAEFQKQCEEYLVII) adopt a coiled-coil conformation. The stretch at 3101-3134 (IEEVKCQALADNAQKDLEEALPALEEAMRALESL) is one TPR 3 repeat. 2 coiled-coil regions span residues 3245-3333 (KRIR…EEDL) and 3552-3596 (VRKE…GSLL). AAA regions lie at residues 3387–3617 (LTNP…EVTE) and 3833–4052 (VTSF…LLSL). 2 TPR repeats span residues 4101 to 4134 (TTPF…LPSM) and 4135 to 4169 (DPPE…QPQI).

Belongs to the dynein heavy chain family. As to quaternary structure, part of the axonemal inner dynein arm complex that consists of at least two heavy chains and a number of intermediate and light chains. Interacts with DNAI4.

The protein resides in the cytoplasm. It localises to the cytoskeleton. It is found in the cilium axoneme. The protein localises to the flagellum axoneme. In terms of biological role, as part of the axonemal inner dynein arm complex plays a central role in ciliary beat. Expressed in sperm flagellum, it is required for sperm motility. Dyneins are microtubule-based molecular motors possessing ATPase activities that can convert the chemical energy of ATP into relative sliding between adjacent microtubule doublets to generate ciliary bending. This is Dynein axonemal heavy chain 2 from Mus musculus (Mouse).